We begin with the raw amino-acid sequence, 443 residues long: Methyl-coenzyme M reductase subunit beta (443 aa).

Tyrosine 367 provides a ligand contact to coenzyme M. Coenzyme B is bound at residue glycine 369.

It belongs to the methyl-coenzyme M reductase beta subunit family. MCR is a hexamer of two alpha, two beta, and two gamma chains, forming a dimer of heterotrimers. It depends on coenzyme F430 as a cofactor.

The protein resides in the cytoplasm. The catalysed reaction is coenzyme B + methyl-coenzyme M = methane + coenzyme M-coenzyme B heterodisulfide. Its pathway is one-carbon metabolism; methyl-coenzyme M reduction; methane from methyl-coenzyme M: step 1/1. Functionally, component of the methyl-coenzyme M reductase (MCR) I that catalyzes the reductive cleavage of methyl-coenzyme M (CoM-S-CH3 or 2-(methylthio)ethanesulfonate) using coenzyme B (CoB or 7-mercaptoheptanoylthreonine phosphate) as reductant which results in the production of methane and the mixed heterodisulfide of CoB and CoM (CoM-S-S-CoB). This is the final step in methanogenesis. This is Methyl-coenzyme M reductase subunit beta (mcrB) from Methanococcus vannielii.